Here is a 147-residue protein sequence, read N- to C-terminus: MESLWNQLDQFTDAPTKQMLQALVKRKQKFENYAAQCRRWRWASLICLGLLCVMIMIKSPEPQLILQEILSHTFYLFWMLATAFAYCTSYYFKKKEEKSETDFHKLRCEIIQKSTDLWPQPDKWKARESVFHMMKHKYDINLYFESK.

2 helical membrane passes run 42 to 62 and 64 to 84; these read WASLICLGLLCVMIMIKSPEP and LILQEILSHTFYLFWMLATAF.

Its subcellular location is the cell membrane. This is an uncharacterized protein from Bacillus subtilis (strain 168).